Consider the following 231-residue polypeptide: Large ribosomal subunit protein uL1 (231 aa).

It belongs to the universal ribosomal protein uL1 family. Part of the 50S ribosomal subunit.

Functionally, binds directly to 23S rRNA. The L1 stalk is quite mobile in the ribosome, and is involved in E site tRNA release. Its function is as follows. Protein L1 is also a translational repressor protein, it controls the translation of the L11 operon by binding to its mRNA. This Staphylococcus carnosus (strain TM300) protein is Large ribosomal subunit protein uL1.